The primary structure comprises 102 residues: Large ribosomal subunit protein bL21 (102 aa).

It belongs to the bacterial ribosomal protein bL21 family. In terms of assembly, part of the 50S ribosomal subunit. Contacts protein L20.

Functionally, this protein binds to 23S rRNA in the presence of protein L20. This Latilactobacillus sakei subsp. sakei (strain 23K) (Lactobacillus sakei subsp. sakei) protein is Large ribosomal subunit protein bL21.